The chain runs to 431 residues: Glucose-1-phosphate adenylyltransferase (431 aa).

Alpha-D-glucose 1-phosphate contacts are provided by residues Tyr-108, Gly-174, 189–190 (EK), and Ser-207.

Belongs to the bacterial/plant glucose-1-phosphate adenylyltransferase family. In terms of assembly, homotetramer.

It catalyses the reaction alpha-D-glucose 1-phosphate + ATP + H(+) = ADP-alpha-D-glucose + diphosphate. It functions in the pathway glycan biosynthesis; glycogen biosynthesis. In terms of biological role, involved in the biosynthesis of ADP-glucose, a building block required for the elongation reactions to produce glycogen. Catalyzes the reaction between ATP and alpha-D-glucose 1-phosphate (G1P) to produce pyrophosphate and ADP-Glc. The chain is Glucose-1-phosphate adenylyltransferase from Actinobacillus succinogenes (strain ATCC 55618 / DSM 22257 / CCUG 43843 / 130Z).